The sequence spans 607 residues: MHHSIRNIAIIAHVDHGKTTLLDKLLQQSGTFEEHEEKTERIMDSNDLEKERGITILSKNTSIKWNNYKINIVDTPGHADFGGEVERVMSMVDSVLLVVDALDGPMPQTRFVTKKAFKYGLNPIVVINKIDRIHSRPDWVVDQVFDLFVNLNASDEQLDFPIIYTSAVLGTSGTDYLNMQNNMIPLYESIIKYAPAPNVNSDQKFQMQISQLDYNSYLGVIGVGRVKQGSIKTNDKVTIIDRFGKHRSGKVNKVLNYFGLKRMEINQGYAGDIIAITGLNKLKISDTICHPDNLQPLPALSIDEPTVNMFFSVNTSPFSGKEGKYITSRQILERLKKETMHNVALQIKETKDPNIFSVSGRGELHLSILIENMRREGFELEVSRPKIIFREINGIQKEPFENVTLDIEEKNQGSVMQFIGIRKGELKNMIPDSKGRVRLEYILSSRALIGFRSEFMSITSGTGLCYSSFSHYDNLQNSNIGQRKNGVLISNSTGMAVGFSLFNLQERGKLFIGHGAQVYEGQIIGLHNRSNDLTVNCLTGKKLTNMRASGTDEAIVLTTAIHFTLEEAIGFINDDELVEVTPHSIRIRKFYLKENERKRANRNKKSI.

The tr-type G domain occupies 3-198 (HSIRNIAIIA…SIIKYAPAPN (196 aa)). Residues 15 to 20 (DHGKTT) and 128 to 131 (NKID) contribute to the GTP site.

This sequence belongs to the TRAFAC class translation factor GTPase superfamily. Classic translation factor GTPase family. BipA subfamily. As to quaternary structure, monomer.

It is found in the cytoplasm. The catalysed reaction is GTP + H2O = GDP + phosphate + H(+). A 50S ribosomal subunit assembly protein with GTPase activity, required for 50S subunit assembly at low temperatures, may also play a role in translation. Binds GTP and analogs. Binds the 70S ribosome between the 30S and 50S subunits, in a similar position as ribosome-bound EF-G; it contacts a number of ribosomal proteins, both rRNAs and the A-site tRNA. The protein is Large ribosomal subunit assembly factor BipA of Buchnera aphidicola subsp. Acyrthosiphon pisum (strain APS) (Acyrthosiphon pisum symbiotic bacterium).